We begin with the raw amino-acid sequence, 720 residues long: Mitogen-activated protein kinase 6 (720 aa).

M1 is covalently cross-linked (Peptide (Met-Gly) (interchain with G-Cter in ubiquitin)). One can recognise a Protein kinase domain in the interval 20-316 (YMDLKPLGCG…AEEALSHPYM (297 aa)). Residues 26–34 (LGCGGNGLV) and K49 contribute to the ATP site. Catalysis depends on D152, which acts as the Proton acceptor. The residue at position 189 (S189) is a Phosphoserine; by PAK1, PAK2 and PAK3. Residues 189–191 (SEG) carry the SEG motif motif. The FRIEDE motif motif lies at 332-337 (FHIEDE). A phosphoserine mark is found at S386, S452, S554, and S556. The disordered stretch occupies residues 638 to 657 (SEMLETEPVEEGKRGERGRE). Over residues 647-657 (EEGKRGERGRE) the composition is skewed to basic and acidic residues. A Phosphoserine modification is found at S683. Polar residues predominate over residues 698 to 714 (PSAMKSSPQIPHKTYSN). The disordered stretch occupies residues 698–720 (PSAMKSSPQIPHKTYSNILKHLN).

It belongs to the protein kinase superfamily. CMGC Ser/Thr protein kinase family. MAP kinase subfamily. In terms of assembly, heterodimer with ERK4/MAPK4. Interacts with (via FRIEDE motif) MAPKAPK5. Interacts with UBE3A; this interaction may be indirect and mediated by HERC2, possibly via HERC2 interaction with NEURL4. Requires Mg(2+) as cofactor. Post-translationally, phosphorylated at Ser-189 by PAK1, PAK2 and PAK3 resulting in catalytic activation. Phosphorylated by MAPKAPK5 at other sites. In terms of processing, ubiquitination at Met-1 leads to degradation by the proteasome pathway. Highest levels within the nervous system, expressed in different tissues, mostly in skeletal muscle.

It is found in the cytoplasm. The protein resides in the nucleus. The enzyme catalyses L-seryl-[protein] + ATP = O-phospho-L-seryl-[protein] + ADP + H(+). The catalysed reaction is L-threonyl-[protein] + ATP = O-phospho-L-threonyl-[protein] + ADP + H(+). Its activity is regulated as follows. Activated by phosphorylation at Ser-189. In terms of biological role, atypical MAPK protein. Phosphorylates microtubule-associated protein 2 (MAP2) and MAPKAPK5. The precise role of the complex formed with MAPKAPK5 is still unclear, but the complex follows a complex set of phosphorylation events: upon interaction with atypical MAPKAPK5, ERK3/MAPK6 is phosphorylated at Ser-189 and then mediates phosphorylation and activation of MAPKAPK5, which in turn phosphorylates ERK3/MAPK6. May promote entry in the cell cycle. The protein is Mitogen-activated protein kinase 6 (Mapk6) of Rattus norvegicus (Rat).